We begin with the raw amino-acid sequence, 224 residues long: Flagellar L-ring protein (224 aa).

The first 15 residues, Met1–Gly15, serve as a signal peptide directing secretion. Cys16 carries the N-palmitoyl cysteine lipid modification. Cys16 carries S-diacylglycerol cysteine lipidation.

The protein belongs to the FlgH family. As to quaternary structure, the basal body constitutes a major portion of the flagellar organelle and consists of four rings (L,P,S, and M) mounted on a central rod.

The protein resides in the cell outer membrane. Its subcellular location is the bacterial flagellum basal body. Its function is as follows. Assembles around the rod to form the L-ring and probably protects the motor/basal body from shearing forces during rotation. This chain is Flagellar L-ring protein, found in Trichlorobacter lovleyi (strain ATCC BAA-1151 / DSM 17278 / SZ) (Geobacter lovleyi).